A 664-amino-acid polypeptide reads, in one-letter code: Sodium/glucose cotransporter 1 (664 aa).

The Extracellular segment spans residues 1–24; the sequence is MDSSTWSPPATATAEPLQAYERIR. The chain crosses the membrane as a helical span at residues 25–47; the sequence is NAADISVIVIYFVVVMAVGLWAM. Residues 48–66 are Cytoplasmic-facing; sequence FSTNRGTVGGFFLAGRSMV. The chain crosses the membrane as a helical span at residues 67 to 90; that stretch reads WWPIGASLFASNIGSGHFVGLAGT. Residues 91 to 95 are Extracellular-facing; sequence GAAAG. A helical transmembrane segment spans residues 96-117; the sequence is IATGGFEWNALILVVLLGWVFV. Topologically, residues 118 to 139 are cytoplasmic; sequence PIYIKAGVVTMPEYLRKRFGGQ. The helical transmembrane segment at 140 to 169 threads the bilayer; it reads RIQVYLSVLSLVLYIFTKISADIFSGAIFI. The Extracellular portion of the chain corresponds to 170–176; it reads NLALGLD. The chain crosses the membrane as a helical span at residues 177 to 193; sequence LYLAIFILLAITALYTI. Over 194 to 202 the chain is Cytoplasmic; that stretch reads TGGLAAVIY. The chain crosses the membrane as a helical span at residues 203–221; that stretch reads TDTLQTVIMLLGSFILTGF. Over 222-275 the chain is Extracellular; that stretch reads AFHEVGGYSAFVTKYMNAIPTVTSYGNTTVKKECYTPRADSFHIFRDPLKGDLP. N-linked (GlcNAc...) asparagine glycosylation occurs at N248. 5 cysteine pairs are disulfide-bonded: C255–C511, C255–C610, C345–C351, C355–C361, and C517–C522. The chain crosses the membrane as a helical span at residues 276-295; it reads WPGLIFGLTIISLWYWCTDQ. Over 296-309 the chain is Cytoplasmic; sequence VIVQRCLSAKNMSH. Residues 310–331 traverse the membrane as a helical segment; sequence VKAGCIMCGYMKLLPMFLMVMP. Residues 332–375 are Extracellular-facing; that stretch reads GMISRILFTEKVACTVPSECEKYCGTKVGCTNIAYPTLVVELMP. The chain crosses the membrane as a helical span at residues 376 to 406; sequence NGLRGLMLSVMLASLMSSLTSIFNSASTLFT. Topologically, residues 407 to 422 are cytoplasmic; sequence MDIYTKIRKKASEKEL. Residues 423-444 form a helical membrane-spanning segment; sequence MIAGRLFMLVLIGVSIAWVPIV. Residues 445–451 lie on the Extracellular side of the membrane; it reads QSAQSGQ. A helical membrane pass occupies residues 452 to 477; the sequence is LFDYIQSITSYLGPPIAAVFLLAIFC. Q457 is a D-glucose binding site. At 478-481 the chain is on the cytoplasmic side; it reads KRVN. The helical transmembrane segment at 482–504 threads the bilayer; that stretch reads EPGAFWGLIIGFLIGVSRMITEF. Topologically, residues 505–525 are extracellular; that stretch reads AYGTGSCMEPSNCPTIICGVH. Residues 526-547 traverse the membrane as a helical segment; sequence YLYFAIILFVITIIVILAISLF. The Cytoplasmic portion of the chain corresponds to 548–644; the sequence is TKPIADVHLY…TSEKRLWRMV (97 aa). The helical transmembrane segment at 645 to 662 threads the bilayer; the sequence is VNINGIILLAVAVFCHAY. At 663–664 the chain is on the extracellular side; it reads FA.

This sequence belongs to the sodium:solute symporter (SSF) (TC 2.A.21) family. N-glycosylation is not necessary for the cotransporter function.

Its subcellular location is the apical cell membrane. The enzyme catalyses D-glucose(out) + 2 Na(+)(out) = D-glucose(in) + 2 Na(+)(in). It catalyses the reaction D-galactose(out) + 2 Na(+)(out) = D-galactose(in) + 2 Na(+)(in). Its activity is regulated as follows. Enhanced by the interaction with PDZK1IP1/MAP17; but unlike SLC5A2/SGLT2, PDZK1IP1 is not essential for SLC5A1 transporter activity. Possibly modulated by cholesterol binding. Functionally, electrogenic Na(+)-coupled sugar symporter that actively transports D-glucose or D-galactose at the plasma membrane, with a Na(+) to sugar coupling ratio of 2:1. Transporter activity is driven by a transmembrane Na(+) electrochemical gradient set by the Na(+)/K(+) pump. Has a primary role in the transport of dietary monosaccharides from enterocytes to blood. Responsible for the absorption of D-glucose or D-galactose across the apical brush-border membrane of enterocytes, whereas basolateral exit is provided by GLUT2. Additionally, functions as a D-glucose sensor in enteroendocrine cells, triggering the secretion of the incretins GCG and GIP that control food intake and energy homeostasis. Together with SGLT2, functions in reabsorption of D-glucose from glomerular filtrate, playing a nonredundant role in the S3 segment of the proximal tubules. Transports D-glucose into endometrial epithelial cells, controlling glycogen synthesis and nutritional support for the embryo as well as the decidual transformation of endometrium prior to conception. Acts as a water channel enabling passive water transport in response to the osmotic gradient created upon sugar and Na(+) uptake. Has high water conductivity comparable to aquaporins and therefore is expected to play an important role in transepithelial water permeability, especially in the small intestine. The polypeptide is Sodium/glucose cotransporter 1 (SLC5A1) (Ovis aries (Sheep)).